A 294-amino-acid polypeptide reads, in one-letter code: Lysozyme M1 (294 aa).

The 214-residue stretch at 81-294 folds into the Ch-type lysozyme domain; it reads GVQGIDVSHW…RLLALANNTA (214 aa). Active-site residues include Asp-86, Asp-175, and Glu-177. Cysteines 185 and 224 form a disulfide.

This sequence belongs to the glycosyl hydrolase 25 family.

The protein localises to the secreted. It catalyses the reaction Hydrolysis of (1-&gt;4)-beta-linkages between N-acetylmuramic acid and N-acetyl-D-glucosamine residues in a peptidoglycan and between N-acetyl-D-glucosamine residues in chitodextrins.. Its function is as follows. This enzyme has both lysozyme (acetylmuramidase) and diacetylmuramidase activities. In Streptomyces globisporus, this protein is Lysozyme M1 (acm).